The sequence spans 235 residues: Ribonuclease PH (235 aa).

Residues arginine 86 and 124–126 (GTR) each bind phosphate.

It belongs to the RNase PH family. As to quaternary structure, homohexameric ring arranged as a trimer of dimers.

The enzyme catalyses tRNA(n+1) + phosphate = tRNA(n) + a ribonucleoside 5'-diphosphate. In terms of biological role, phosphorolytic 3'-5' exoribonuclease that plays an important role in tRNA 3'-end maturation. Removes nucleotide residues following the 3'-CCA terminus of tRNAs; can also add nucleotides to the ends of RNA molecules by using nucleoside diphosphates as substrates, but this may not be physiologically important. Probably plays a role in initiation of 16S rRNA degradation (leading to ribosome degradation) during starvation. The polypeptide is Ribonuclease PH (Legionella pneumophila (strain Corby)).